The chain runs to 359 residues: DNA replication and repair protein RecF (359 aa).

ATP is bound at residue 30–37; sequence GPNGSGKT.

This sequence belongs to the RecF family.

Its subcellular location is the cytoplasm. The RecF protein is involved in DNA metabolism; it is required for DNA replication and normal SOS inducibility. RecF binds preferentially to single-stranded, linear DNA. It also seems to bind ATP. This chain is DNA replication and repair protein RecF, found in Vibrio parahaemolyticus serotype O3:K6 (strain RIMD 2210633).